The sequence spans 742 residues: Pyriculol/pyriculariol biosynthesis cluster transcription factor 1 (742 aa).

The zn(2)-C6 fungal-type DNA-binding region spans 23-49 (CVLCQHRKIKCDRSFPCANCQRANVQC). The disordered stretch occupies residues 85 to 116 (GKPDIARLTTKRSSLSQSPPKGEEPLPEWNRH). Residues 105-116 (KGEEPLPEWNRH) show a composition bias toward basic and acidic residues.

The protein localises to the nucleus. Transcriptional regulator; part of the gene cluster that mediates the biosynthesis of pyriculol and pyriculariol, two heptaketides that induce lesion formation upon application on rice leaves but are dispensable for pathogenicity. With TRF2, negatively regulates the expression of the gene cluster and the subsequent pyriculol and pyriculariol production. The polypeptide is Pyriculol/pyriculariol biosynthesis cluster transcription factor 1 (Pyricularia oryzae (strain 70-15 / ATCC MYA-4617 / FGSC 8958) (Rice blast fungus)).